A 1203-amino-acid chain; its full sequence is MGNLKSVAQEPGPPCGLGLGLGLGLCGKQGPATPAPEPSRAPASLLPPAPEHSPPSSPLTQPPEGPKFPRVKNWEVGSITYDTLSAQAQQDGPCTPRRCLGSLVFPRKLQGRPSPGPPAPEQLLSQARDFINQYYSSIKRSGSQAHEQRLQEVEAEVAATGTYQLRESELVFGAKQAWRNAPRCVGRIQWGKLQVFDARDCRSAQEMFTYICNHIKYATNRGNLRSAITVFPQRCPGRGDFRIWNSQLVRYAGYRQQDGSVRGDPANVEITELCIQHGWTPGNGRFDVLPLLLQAPDDPPELFLLPPELVLEVPLEHPTLEWFAALGLRWYALPAVSNMLLEIGGLEFPAAPFSGWYMSTEIGTRNLCDPHRYNILEDVAVCMDLDTRTTSSLWKDKAAVEINVAVLHSYQLAKVTIVDHHAATASFMKHLENEQKARGGCPADWAWIVPPISGSLTPVFHQEMVNYFLSPAFRYQPDPWKGSAAKGTGITRKKTFKEVANAVKISASLMGTVMAKRVKATILYGSETGRAQSYAQQLGRLFRKAFDPRVLCMDEYDVVSLEHETLVLVVTSTFGNGDPPENGESFAAALMEMSGPYNSSPRPEQHKSYKIRFNSISCSDPLVSSWRRKRKESSNTDSAGALGTLRFCVFGLGSRAYPHFCAFARAVDTRLEELGGERLLQLGQGDELCGQEEAFRGWAQAAFQAACETFCVGEDAKAAARDIFSPKRSWKRQRYRLSAQAEGLQLLPGLIHVHRRKMFQATIRSVENLQSSKSTRATILVRLDTGGQEGLQYQPGDHIGVCPPNRPGLVEALLSRVEDPPAPTEPVAVEQLEKGSPGGPPPGWVRDPRLPPCTLRQALTFFLDITSPPSPQLLRLLSTLAEEPREQQELEALSQDPRRYEEWKWFRCPTLLEVLEQFPSVALPAPLLLTQLPLLQPRYYSVSSAPSTHPGEIHLTVAVLAYRTQDGLGPLHYGVCSTWLSQLKPGDPVPCFIRGAPSFRLPPDPSLPCILVGPGTGIAPFRGFWQERLHDIESKGLQPTPMTLVFGCRCSQLDHLYRDEVQNAQQRGVFGRVLTAFSREPDNPKTYVQDILRTELAAEVHRVLCLERGHMFVCGDVTMATNVLQTVQRILATEGDMELDEAGDVIGVLRDQQRYHEDIFGLTLRTQEVTSRIRTQSFSLQERQLRGAVPWAFDPPGSDTNSP.

The interval 1–71 (MGNLKSVAQE…PPEGPKFPRV (71 aa)) is disordered. Residue G2 is the site of N-myristoyl glycine attachment. 2 S-palmitoyl cysteine lipidation sites follow: C15 and C26. Positions 15-27 (CGLGLGLGLGLCG) are enriched in gly residues. T33 is subject to Phosphothreonine. Pro residues predominate over residues 33 to 66 (TPAPEPSRAPASLLPPAPEHSPPSSPLTQPPEGP). 2 residues coordinate Zn(2+): C94 and C99. The segment at 98–486 (RCLGSLVFPR…PDPWKGSAAK (389 aa)) is interaction with NOSIP. Position 102 (S102) interacts with (6R)-L-erythro-5,6,7,8-tetrahydrobiopterin. The residue at position 114 (S114) is a Phosphoserine; by CDK5. C184 provides a ligand contact to heme b. L-arginine-binding residues include Q247, W356, Y357, and E361. R365 contacts (6R)-L-erythro-5,6,7,8-tetrahydrobiopterin. Position 366 (N366) interacts with L-arginine. A446, W447, and F460 together coordinate (6R)-L-erythro-5,6,7,8-tetrahydrobiopterin. Y475 is a binding site for heme b. Residues 491 to 510 (TRKKTFKEVANAVKISASLM) are calmodulin-binding. T495 carries the post-translational modification Phosphothreonine; by AMPK. Residues 520–703 (ATILYGSETG…AFRGWAQAAF (184 aa)) enclose the Flavodoxin-like domain. Positions 526, 527, 528, 530, 572, and 573 each coordinate FMN. A phosphoserine mark is found at S615, S633, and S638. 4 residues coordinate FMN: S654, C661, E687, and Q691. The 247-residue stretch at 756 to 1002 (RKMFQATIRS…IRGAPSFRLP (247 aa)) folds into the FAD-binding FR-type domain. Position 776 (R776) interacts with NADP(+). Residue H798 coordinates FAD. Residue S836 is modified to Phosphoserine. 9 residues coordinate FAD: R938, Y940, S941, T956, A958, Y962, V975, C976, and S977. Residues T1016, R1049, S1078, R1079, K1085, Y1087, and Q1089 each contribute to the NADP(+) site. T1175 is subject to Phosphothreonine. At S1177 the chain carries Phosphoserine; by AMPK. S1179 is subject to Phosphoserine.

The protein belongs to the NOS family. In terms of assembly, homodimer. Interacts with NOSIP and NOSTRIN. Interacts with HSP90AB1. Forms a complex with ASL, ASS1 and SLC7A1; the complex regulates cell-autonomous L-arginine synthesis and citrulline recycling while channeling extracellular L-arginine to nitric oxide synthesis pathway. Heme b is required as a cofactor. The cofactor is FAD. FMN serves as cofactor. Requires (6R)-L-erythro-5,6,7,8-tetrahydrobiopterin as cofactor. In terms of processing, phosphorylation by AMPK at Ser-1177 in the presence of Ca(2+)-calmodulin (CaM) activates activity. In absence of Ca(2+)-calmodulin, AMPK also phosphorylates Thr-495, resulting in inhibition of activity. Phosphorylation of Ser-114 by CDK5 reduces activity. Platelets, placenta, liver and kidney.

The protein resides in the cell membrane. It is found in the membrane. Its subcellular location is the caveola. It localises to the cytoplasm. The protein localises to the cytoskeleton. The protein resides in the golgi apparatus. The enzyme catalyses 2 L-arginine + 3 NADPH + 4 O2 + H(+) = 2 L-citrulline + 2 nitric oxide + 3 NADP(+) + 4 H2O. Its activity is regulated as follows. Stimulated by calcium/calmodulin. Inhibited by NOSIP and NOSTRIN. Produces nitric oxide (NO) which is implicated in vascular smooth muscle relaxation through a cGMP-mediated signal transduction pathway. NO mediates vascular endothelial growth factor (VEGF)-induced angiogenesis in coronary vessels and promotes blood clotting through the activation of platelets. Its function is as follows. Lacks eNOS activity, dominant-negative form that may down-regulate eNOS activity by forming heterodimers with isoform 1. This is Nitric oxide synthase 3 from Homo sapiens (Human).